The primary structure comprises 658 residues: Threonine--tRNA ligase (658 aa).

Residues 1–64 enclose the TGS domain; sequence MSNTVSLQFP…GASGKLEIIT (64 aa). Positions 246 to 548 are catalytic; the sequence is DHRRLGREMD…LIENFAGHMP (303 aa). Cys343, His394, and His525 together coordinate Zn(2+).

This sequence belongs to the class-II aminoacyl-tRNA synthetase family. Homodimer. Zn(2+) is required as a cofactor.

It localises to the cytoplasm. It catalyses the reaction tRNA(Thr) + L-threonine + ATP = L-threonyl-tRNA(Thr) + AMP + diphosphate + H(+). In terms of biological role, catalyzes the attachment of threonine to tRNA(Thr) in a two-step reaction: L-threonine is first activated by ATP to form Thr-AMP and then transferred to the acceptor end of tRNA(Thr). Also edits incorrectly charged L-seryl-tRNA(Thr). The sequence is that of Threonine--tRNA ligase from Brucella abortus (strain S19).